We begin with the raw amino-acid sequence, 234 residues long: Preflagellin peptidase (234 aa).

A topological domain (cytoplasmic) is located at residue methionine 1. The chain crosses the membrane as a helical span at residues 2–18 (INFIVGAIGLLIASIYD). Residues 19-23 (LKSRE) are Extracellular-facing. A helical membrane pass occupies residues 24–46 (IEDYVWVSMVIFGLIYNGYLSFI). Residues 47 to 49 (SHD) lie on the Cytoplasmic side of the membrane. Residues 50 to 72 (MLYVIQSIVGFIVCFFLGFFMFL) traverse the membrane as a helical segment. At 73–78 (LGVGGG) the chain is on the extracellular side. A helical membrane pass occupies residues 79 to 89 (DGKLIMGLGAL). Residues 90-110 (IPKYNMPIHTPLGAILNYLYL) are Cytoplasmic-facing. Residues 111 to 139 (PSFPIMVVINAMFFSITLPIIIFLRNVIR) traverse the membrane as a helical segment. Topologically, residues 140–205 (GVKPKTKKEV…EEIWVTPAIP (66 aa)) are extracellular. A helical transmembrane segment spans residues 206–217 (FVVPIFLSYLLT). At 218–234 (SIIGDKIIGIFLSVFGL) the chain is on the cytoplasmic side.

Belongs to the peptidase A24 family. Archaeal preflagellin peptidase subfamily.

It localises to the cell membrane. It carries out the reaction Cleaves the signal peptide of 3 to 12 amino acids from the N-terminal of preflagellin, usually at Arg-Gly-|- or Lys-Gly-|-, to release flagellin.. Functionally, cleaves the N-terminal leader peptide from preflagellins. The sequence is that of Preflagellin peptidase (flaK) from Methanocaldococcus jannaschii (strain ATCC 43067 / DSM 2661 / JAL-1 / JCM 10045 / NBRC 100440) (Methanococcus jannaschii).